The primary structure comprises 472 residues: Adenosylhomocysteinase (472 aa).

The substrate site is built by threonine 64, aspartate 138, and glutamate 198. An NAD(+)-binding site is contributed by 199–201 (TTT). Substrate contacts are provided by lysine 228 and aspartate 232. NAD(+)-binding positions include asparagine 233, 262–267 (GFGDVG), glutamate 285, asparagine 320, 341–343 (IGH), and asparagine 386.

The protein belongs to the adenosylhomocysteinase family. NAD(+) is required as a cofactor.

Its subcellular location is the cytoplasm. It catalyses the reaction S-adenosyl-L-homocysteine + H2O = L-homocysteine + adenosine. It participates in amino-acid biosynthesis; L-homocysteine biosynthesis; L-homocysteine from S-adenosyl-L-homocysteine: step 1/1. May play a key role in the regulation of the intracellular concentration of adenosylhomocysteine. This is Adenosylhomocysteinase from Prochlorococcus marinus (strain MIT 9301).